The primary structure comprises 329 residues: Beta-ketoacyl-[acyl-carrier-protein] synthase III (329 aa).

Residues Cys-123 and His-256 contribute to the active site. An ACP-binding region spans residues 257-261 (QANIR). Asn-286 is a catalytic residue.

Belongs to the thiolase-like superfamily. FabH family. Homodimer.

The protein localises to the cytoplasm. It catalyses the reaction malonyl-[ACP] + acetyl-CoA + H(+) = 3-oxobutanoyl-[ACP] + CO2 + CoA. It functions in the pathway lipid metabolism; fatty acid biosynthesis. Catalyzes the condensation reaction of fatty acid synthesis by the addition to an acyl acceptor of two carbons from malonyl-ACP. Catalyzes the first condensation reaction which initiates fatty acid synthesis and may therefore play a role in governing the total rate of fatty acid production. Possesses both acetoacetyl-ACP synthase and acetyl transacylase activities. Its substrate specificity determines the biosynthesis of branched-chain and/or straight-chain of fatty acids. In Burkholderia thailandensis (strain ATCC 700388 / DSM 13276 / CCUG 48851 / CIP 106301 / E264), this protein is Beta-ketoacyl-[acyl-carrier-protein] synthase III.